Here is a 1742-residue protein sequence, read N- to C-terminus: MRLLWGLLWAFGLFASSLQKPRLLLFSPSVVNLGVPLSVGVQLQDARQGEVVTGFVFLRNPSHNNDRCSPKKAFTLTSQQDFVHLSLQVPQSDAKSCGLFGLRRSPEVQLVAQSPWLRDVLAKETDTQGVNLLFASRRGHFFVQTDQPVYNPGQRVQYRVFALDQKMRPSKDSLLVTVENSRGLRVRKKEVRDPSSIFQDSFLIPDISEPGTWRISAQFSDSLEANSSTKFEVKKYVLPNFEVKITPRKPYILVTSNHLGEIQVDIEARYIYGKPVQGVAYVRFGLLDEDGTKNFLRGLETQLKLKDGKSHVSLSRVELEGALQKLRLSVPDLQGLRLYTSAAVIESPGGEIEEAELTSWHFVPSAFSLDLSNTKRHLVPGAPFLLQALVREASGPPAPDVPVKVSVTLSGSVPKVPEIVQNTDRMGQVNMAINIPWGTTRLQLLVSAGSLYPAVARLEVRAPPSGSSGFLSIERPDPRAPRVQETVTLNLRSVGLSRATFPYYYYMVLSRGEIVSVGRERRQELTSVSVFVDHHLAPAFYFVAFYYHKGQPVANSLRVDVEAGACEGKLELRLDGTKDYRNGDSAKLQLLTDSEALVALGAVDTALYAVGSRTHKPLDMAKVFEVMNSYNLGCGPGGGDSAPQVFRAVGLAFSDGDLWTPVRETLSCPKEEKARKKRSVDFQKAVSEKLGQFASPEAKRCCQDGLTRLPMVRSCEQRAARVLQPACREPFLSCCQFAESLRKKSRAESPGGLGRAMEVLQEEELLEEDMILVRSFFPENWLWRVLRVDRSETLTVWLPDSMTTWEIHGVSLSQSKGLCVATPARLRVFREFHLHVRLPASIRRFEQLELRPVLYNYLEENLTMSVHIAPVEGLCLAGGGGLAQQVHVPAGSARPVPFFVVPTAATAVSLKVVARGTTLVGDAVSKVLQIEKEGAIHQEELVYELNPLDHRARTLEIPGNSDPNMIPEGESSSFVRVTASNPLETLGSEGALSPGGIASHLRLPTGCGEQTMTLLAPTLAASRYLDRTEQWSKLPPETKDRAVDLIQKGYMRIQEYRKSDGSYAAWLSRESSTWLTAFVLKVLSLAQDQVGGSPEKLQETASWLLGMQQADGSFHDPCPVIHRDMQGGLVGSDETVALTAFVVIALQHGLNAFQDQSAEALKQRVKASILKADSYLGGKASAGLLGAHAAAITAYALTLTKAPQDLQDVAHNNLMVMAQEIGDNRYWGSVTTSQSNVVSPTLAPLSPTDPMPQAPALWIETTAYGLLHLLLREGKAELADQVANWLMHQASFHGGFRSTQDTVMAMDALSAYWIASHTTENKELNVTLSAMGRRGFKSHILQLDSRQVQGLEEELQFSLSSKISVKVGGNSKGTLKVLRTYHVLDMTNTTCQDLRIEVTVMGYVEYTRQANADYEEDYEYDEFLAGDDPGAPLRPVMPLQLFEGRRNRRRREAPKVAEEQEPRVQYTVCIWREGKMRLSGMAIADITLLSGFSALSADLEKLTSLSDRYVSHFETQGPHVLLYFDSVPTSRECVGFGAMQEVAVGLVQPASAVVYDYYSPERRCSVFYGAPEKSKLLSTLCSGDVCQCAEGKCPRQRRALERGLQDEDRYRMKFACYHPRVEYGFQVRVLREDSRAAFRLFETKIIQVLHFTKDAKAAADQTRNFLVRDSCRLHLEPGREYLIMGLDGITSDLKGDPQYLLDSKSWIEEMPSERLCRSTRQRAACAQLNDFIQEYSTLGCQV.

The signal sequence occupies residues 1-19 (MRLLWGLLWAFGLFASSLQ). A glycan (N-linked (GlcNAc...) asparagine) is linked at N60. Cysteines 68 and 97 form a disulfide. N226 carries an N-linked (GlcNAc...) asparagine glycan. A disulfide bond links C634 and C668. Residues 675–678 (RKKR) constitute a propeptide that is removed on maturation. Disulfide bonds link C701–C727, C702–C734, and C715–C735. In terms of domain architecture, Anaphylatoxin-like spans 701 to 735 (CCQDGLTRLPMVRSCEQRAARVLQPACREPFLSCC). An N-linked (GlcNAc...) asparagine glycan is attached at N861. Positions 1007 to 1010 (CGEQ) form a cross-link, isoglutamyl cysteine thioester (Cys-Gln). 2 N-linked (GlcNAc...) asparagine glycosylation sites follow: N1325 and N1388. Sulfotyrosine occurs at positions 1414, 1418, and 1420. Positions 1445 to 1451 (RRNRRRR) are excised as a propeptide. 5 cysteine pairs are disulfide-bonded: C1469–C1533, C1581–C1586, C1593–C1671, C1616–C1740, and C1716–C1725. Residues 1593–1740 (CPRQRRALER…FIQEYSTLGC (148 aa)) enclose the NTR domain.

In terms of assembly, in absence of complement activation, circulates in blood as a disulfide-linked trimer of an alpha, beta and gamma chain. As to quaternary structure, complement C4b is composed of complement C4b-A, complement C4 beta and complement C4 gamma chains that are associated via disulfide bonds. Non-enzymatic component of the C3 convertase, also named C4bC2b, composed of the serine protease complement C2b (C2), as well as complement C4b. Non-enzymatic component of the C5 convertase, also named C4bC2bC3b, composed of the serine protease complement C2b (C2), complement C3b, as well as complement C4b. Post-translationally, prior to secretion, the single-chain precursor is enzymatically cleaved by plasminogen (PLG) to yield non-identical chains alpha, beta and gamma. During activation of the complement systems, the alpha chain is cleaved into C4a and C4b by different proteases depending on the complement pathway: C4b stays linked to the beta and gamma chains, while C4a is released in the plasma. The alpha chain is cleaved by C1S to generate C4a and C4b following activation by the classical complement system. The alpha chain is cleaved to generate C4a and C4b by MASP2 following activation by the lectin complement system. The alpha chain is cleaved by GZMK to generate C4a and C4b following activation by the GZMK complement system. Further degradation of C4b by C1 into the inactive fragments C4c and C4d blocks the generation of C3 convertase. The proteolytic cleavages often are incomplete so that many structural forms can be found in plasma. In terms of processing, upon activation, the internal thioester bond reacts with carbohydrate antigens on the target surface to form amide or ester bonds, leading to covalent association with the surface of pathogens. Complement C4b interacts with complement C3b via a thioester linkage. Post-translationally, N- and O-glycosylated. O-glycosylated with a core 1 or possibly core 8 glycan.

The protein resides in the secreted. The protein localises to the cell surface. In terms of biological role, precursor of non-enzymatic components of the classical, lectin and GZMK complement pathways, which consist in a cascade of proteins that leads to phagocytosis and breakdown of pathogens and signaling that strengthens the adaptive immune system. Non-enzymatic component of C3 and C5 convertases. Generated following cleavage by complement proteases (C1S, MASP2 or GZMK, depending on the complement pathway), it covalently attaches to the surface of pathogens, where it acts as an opsonin that marks the surface of antigens for removal. It then recruits the serine protease complement C2b to form the C3 and C5 convertases, which cleave and activate C3 and C5, respectively, the next components of the complement pathways. Complement C4b-A isotype is responsible for effective binding to form amide bonds with immune aggregates or protein antigens, while complement C4b-B isotype catalyzes the transacylation of the thioester carbonyl group to form ester bonds with carbohydrate antigens. Its function is as follows. Putative humoral mediator released following cleavage by complement proteases (C1S, MASP2 or GZMK, depending on the complement pathway). While it is strongly similar to anaphylatoxins, its role is unclear. Was reported to act as a mediator of local inflammatory process; however these effects were probably due to contamination with C3a and/C5a anaphylatoxins in biological assays. This Cavia porcellus (Guinea pig) protein is Complement C4.